A 24-amino-acid polypeptide reads, in one-letter code: Ascaphin-6 (24 aa).

As to expression, expressed by the skin glands.

Its subcellular location is the secreted. Antimicrobial peptide that shows higher potency against Gram-negative bacteria than against Gram-positive bacteria. Has a very week hemolytic activity. The chain is Ascaphin-6 from Ascaphus truei (Coastal tailed frog).